Here is a 317-residue protein sequence, read N- to C-terminus: Ceramide reductase (317 aa).

An N-terminal signal peptide occupies residues 1–27 (MATDARGVVAITGATGFLGRHLVRALA).

Belongs to the NAD(P)-dependent epimerase/dehydratase family.

It localises to the periplasm. The enzyme catalyses N-acyl-3-oxosphinganine + NADH + H(+) = an N-acylsphinganine + NAD(+). The protein operates within lipid metabolism; sphingolipid metabolism. Its function is as follows. Involved in de novo bacterial ceramide synthesis. Catalyzes the reduction of bacterial oxidized ceramides to bacterial dihydroceramides. The polypeptide is Ceramide reductase (Caulobacter vibrioides (strain NA1000 / CB15N) (Caulobacter crescentus)).